The following is a 505-amino-acid chain: ATP synthase subunit alpha (505 aa).

170–177 lines the ATP pocket; it reads GDRQTGKS.

It belongs to the ATPase alpha/beta chains family. In terms of assembly, F-type ATPases have 2 components, CF(1) - the catalytic core - and CF(0) - the membrane proton channel. CF(1) has five subunits: alpha(3), beta(3), gamma(1), delta(1), epsilon(1). CF(0) has four main subunits: a(1), b(1), b'(1) and c(9-12).

It is found in the cellular thylakoid membrane. The enzyme catalyses ATP + H2O + 4 H(+)(in) = ADP + phosphate + 5 H(+)(out). Its function is as follows. Produces ATP from ADP in the presence of a proton gradient across the membrane. The alpha chain is a regulatory subunit. The polypeptide is ATP synthase subunit alpha (Prochlorococcus marinus (strain AS9601)).